Here is a 191-residue protein sequence, read N- to C-terminus: Protein GrpE (191 aa).

The segment covering 1 to 21 (MSDKKKNAEEFEETFSDKTSE) has biased composition (basic and acidic residues). A disordered region spans residues 1 to 39 (MSDKKKNAEEFEETFSDKTSEDESTVENETVEENENEDV). Residues 22 to 38 (DESTVENETVEENENED) are compositionally biased toward acidic residues.

The protein belongs to the GrpE family. As to quaternary structure, homodimer.

The protein resides in the cytoplasm. Functionally, participates actively in the response to hyperosmotic and heat shock by preventing the aggregation of stress-denatured proteins, in association with DnaK and GrpE. It is the nucleotide exchange factor for DnaK and may function as a thermosensor. Unfolded proteins bind initially to DnaJ; upon interaction with the DnaJ-bound protein, DnaK hydrolyzes its bound ATP, resulting in the formation of a stable complex. GrpE releases ADP from DnaK; ATP binding to DnaK triggers the release of the substrate protein, thus completing the reaction cycle. Several rounds of ATP-dependent interactions between DnaJ, DnaK and GrpE are required for fully efficient folding. The sequence is that of Protein GrpE from Tetragenococcus halophilus (Pediococcus halophilus).